The primary structure comprises 345 residues: Dihydroorotate dehydrogenase (quinone) (345 aa).

FMN-binding positions include 65 to 69 (AGLDK) and T89. K69 is a binding site for substrate. Substrate is bound at residue 114–118 (NRMGF). FMN is bound by residues N142 and N175. N175 contacts substrate. The active-site Nucleophile is the S178. N180 contributes to the substrate binding site. The FMN site is built by K220 and T248. Residue 249–250 (NT) participates in substrate binding. FMN-binding positions include G271, G300, and 321–322 (YT).

This sequence belongs to the dihydroorotate dehydrogenase family. Type 2 subfamily. Monomer. FMN serves as cofactor.

The protein localises to the cell membrane. It carries out the reaction (S)-dihydroorotate + a quinone = orotate + a quinol. It participates in pyrimidine metabolism; UMP biosynthesis via de novo pathway; orotate from (S)-dihydroorotate (quinone route): step 1/1. Its function is as follows. Catalyzes the conversion of dihydroorotate to orotate with quinone as electron acceptor. The sequence is that of Dihydroorotate dehydrogenase (quinone) from Burkholderia lata (strain ATCC 17760 / DSM 23089 / LMG 22485 / NCIMB 9086 / R18194 / 383).